The chain runs to 426 residues: Probable imidazolonepropionase (426 aa).

The 4-imidazolone-5-propanoate site is built by Tyr159 and His192. Residue Tyr159 coordinates N-formimidoyl-L-glutamate. Fe(3+) is bound at residue His260. His260 provides a ligand contact to Zn(2+). Glu263 serves as a coordination point for 4-imidazolone-5-propanoate. Position 334 (Asp334) interacts with Fe(3+). A Zn(2+)-binding site is contributed by Asp334. Asn336 contributes to the N-formimidoyl-L-glutamate binding site.

Belongs to the metallo-dependent hydrolases superfamily. HutI family. Zn(2+) is required as a cofactor. The cofactor is Fe(3+).

It catalyses the reaction 4-imidazolone-5-propanoate + H2O = N-formimidoyl-L-glutamate. Its pathway is amino-acid degradation; L-histidine degradation into L-glutamate; N-formimidoyl-L-glutamate from L-histidine: step 3/3. The chain is Probable imidazolonepropionase (Amdhd1) from Mus musculus (Mouse).